A 545-amino-acid polypeptide reads, in one-letter code: High-affinity glucose transporter 1 (545 aa).

A run of 9 helical transmembrane segments spans residues 29-49, 72-92, 100-120, 125-145, 157-177, 192-212, 291-311, 317-337, and 345-365; these read VFFI…DISS, GFIT…SSFV, LSLL…SSVQ, LIIG…VAPV, GLIG…MFYL, IAWG…FFIP, LTGM…AGYS, VASS…LYFI, and LLIG…GILG. Asn-376 and Asn-387 each carry an N-linked (GlcNAc...) asparagine glycan. A run of 2 helical transmembrane segments spans residues 395–415 and 433–453; these read IACC…GIWV and ISTS…PTGF. An N-linked (GlcNAc...) asparagine glycan is attached at Asn-455. Residues 460–480 form a helical membrane-spanning segment; it reads TYIIYGVFCFAMATHVYFGFP. The interval 524–545 is disordered; it reads VEHEEDKLMNEDSNSESRENQA.

Belongs to the major facilitator superfamily. Sugar transporter (TC 2.A.1.1) family. Interacts with the human complement factors FH and C4BP. Also binds human immunodeficiency virus (HIV) protein gp160.

The protein resides in the cell membrane. High-affinity glucose transporter. Acts as a multifunctional complement-evasion molecule that causes down-regulation of complement activation by acquisition of human complement factors FH and C4BP. Also functions as a human immunodeficiency virus (HIV) receptor via binding the viral gp160 protein. Modulates hyphae formation. The chain is High-affinity glucose transporter 1 from Candida albicans (strain SC5314 / ATCC MYA-2876) (Yeast).